Here is a 279-residue protein sequence, read N- to C-terminus: Polyamine aminopropyltransferase (279 aa).

The PABS domain maps to 4–237 (IEWYPRGYGV…SPWAFLVGIK (234 aa)). Position 29 (glutamine 29) interacts with S-methyl-5'-thioadenosine. Positions 60 and 84 each coordinate spermidine. S-methyl-5'-thioadenosine-binding positions include glutamate 104 and 141–142 (DG). Residue aspartate 158 is the Proton acceptor of the active site. 158–161 (DSTD) contacts spermidine. Proline 165 is a binding site for S-methyl-5'-thioadenosine.

It belongs to the spermidine/spermine synthase family. In terms of assembly, homodimer or homotetramer.

Its subcellular location is the cytoplasm. The enzyme catalyses S-adenosyl 3-(methylsulfanyl)propylamine + putrescine = S-methyl-5'-thioadenosine + spermidine + H(+). It participates in amine and polyamine biosynthesis; spermidine biosynthesis; spermidine from putrescine: step 1/1. Its function is as follows. Catalyzes the irreversible transfer of a propylamine group from the amino donor S-adenosylmethioninamine (decarboxy-AdoMet) to putrescine (1,4-diaminobutane) to yield spermidine. The sequence is that of Polyamine aminopropyltransferase from Pyrococcus abyssi (strain GE5 / Orsay).